Consider the following 303-residue polypeptide: uncharacterized protein (303 aa).

Positions M1 to S24 are cleaved as a signal peptide. N-linked (GlcNAc...) asparagine glycosylation occurs at N116. Residues F124–N179 form a disordered region. Over residues D135–E149 the composition is skewed to acidic residues. Residues K155–K164 are compositionally biased toward basic residues. Residues A167–P178 show a composition bias toward polar residues.

This is an uncharacterized protein from Caenorhabditis elegans.